Consider the following 211-residue polypeptide: Pyridoxine/pyridoxamine 5'-phosphate oxidase (211 aa).

Residues 7-10 and K65 contribute to the substrate site; that span reads RRDY. Residues 60–65, 75–76, R81, K82, and Q104 each bind FMN; these read RIVLLK and YT. The substrate site is built by Y122, R126, and S130. Residues 139 to 140 and W184 each bind FMN; that span reads QS. 190 to 192 serves as a coordination point for substrate; the sequence is RLH. R194 is an FMN binding site.

Belongs to the pyridoxamine 5'-phosphate oxidase family. As to quaternary structure, homodimer. Requires FMN as cofactor.

It catalyses the reaction pyridoxamine 5'-phosphate + O2 + H2O = pyridoxal 5'-phosphate + H2O2 + NH4(+). The enzyme catalyses pyridoxine 5'-phosphate + O2 = pyridoxal 5'-phosphate + H2O2. It functions in the pathway cofactor metabolism; pyridoxal 5'-phosphate salvage; pyridoxal 5'-phosphate from pyridoxamine 5'-phosphate: step 1/1. The protein operates within cofactor metabolism; pyridoxal 5'-phosphate salvage; pyridoxal 5'-phosphate from pyridoxine 5'-phosphate: step 1/1. Catalyzes the oxidation of either pyridoxine 5'-phosphate (PNP) or pyridoxamine 5'-phosphate (PMP) into pyridoxal 5'-phosphate (PLP). This is Pyridoxine/pyridoxamine 5'-phosphate oxidase from Aliivibrio fischeri (strain ATCC 700601 / ES114) (Vibrio fischeri).